A 285-amino-acid polypeptide reads, in one-letter code: 1,4-dihydroxy-2-naphthoyl-CoA synthase (285 aa).

Substrate is bound by residues Arg45, 84–88, Tyr97, 129–133, Thr155, Ser161, Tyr258, and Lys273; these read SGGDQ and YAIGG. Residue 154–156 participates in hydrogencarbonate binding; the sequence is QTG.

It belongs to the enoyl-CoA hydratase/isomerase family. MenB subfamily. Requires hydrogencarbonate as cofactor.

The catalysed reaction is 2-succinylbenzoyl-CoA + H(+) = 1,4-dihydroxy-2-naphthoyl-CoA + H2O. It functions in the pathway quinol/quinone metabolism; 1,4-dihydroxy-2-naphthoate biosynthesis; 1,4-dihydroxy-2-naphthoate from chorismate: step 6/7. It participates in quinol/quinone metabolism; menaquinone biosynthesis. In terms of biological role, converts o-succinylbenzoyl-CoA (OSB-CoA) to 1,4-dihydroxy-2-naphthoyl-CoA (DHNA-CoA). The protein is 1,4-dihydroxy-2-naphthoyl-CoA synthase of Haemophilus influenzae (strain ATCC 51907 / DSM 11121 / KW20 / Rd).